A 634-amino-acid chain; its full sequence is Putative peptidoglycan O-acetyltransferase YrhL (634 aa).

The next 11 membrane-spanning stretches (helical) occupy residues 10–30 (YIPGLDGLRAFAVLSVITYHL), 38–58 (GFIGVDIFFVLSGYLITSILL), 79–99 (RLLPAAYLMIFSTVVWVVLFD), 110–130 (AISSLFYMSNWWFIFHKLSYF), 145–165 (LAIEEQFYIIWPMFLVVGMYI), 172–192 (LAAVISLLVLCSAVMMSVLYE), 244–264 (FLAFCILVLCVYFTDEYEPFL), 270–290 (LFISVTAAILIACVCHPSSFL), 307–327 (YGIYLWHYPVIVLSTPVQEIG), 329–349 (PVFWHIVLKVIVTCILAELSY), and 385–405 (MSIGFIIFAILIFAGGLSGLA). A disordered region spans residues 413–481 (KWTYSSQETN…SQQLKKPADT (69 aa)). Over residues 414–429 (WTYSSQETNADTSQAS) the composition is skewed to polar residues. Composition is skewed to basic and acidic residues over residues 430 to 447 (GDKKNAAADKKHNPEQKT) and 455 to 470 (KENKDSGQETHKKKDT).

Belongs to the acyltransferase 3 family.

Its subcellular location is the cell membrane. This Bacillus subtilis (strain 168) protein is Putative peptidoglycan O-acetyltransferase YrhL (yrhL).